Here is a 263-residue protein sequence, read N- to C-terminus: MTTKPQKPHILVCNDDGIEGLGLHALAASMKKLGSVTVVAPAEPQSGKSHGMTLGEPLRIRRYQKNNRFFGYTVSGTPVDCIKVALSHILDAKPDLIVSGINYGSNTAMNSLYSGTVAAAREGAIQNVPSLAFSLTTYENADFTYAAKFARQLAREVLRRGMPPDTILSANIPNVPEKEIRGILFTRQGRSRWEESTIERHDMYGNPYYWLAGSLQLHDNDLAEDEYAVRHNYVAVTPITCDMTDHRFRSELETWGLQNTIKK.

A divalent metal cation contacts are provided by D15, D16, S46, and N102.

Belongs to the SurE nucleotidase family. A divalent metal cation is required as a cofactor.

It localises to the cytoplasm. The catalysed reaction is a ribonucleoside 5'-phosphate + H2O = a ribonucleoside + phosphate. Nucleotidase that shows phosphatase activity on nucleoside 5'-monophosphates. This is 5'-nucleotidase SurE from Chlorobaculum tepidum (strain ATCC 49652 / DSM 12025 / NBRC 103806 / TLS) (Chlorobium tepidum).